The following is a 240-amino-acid chain: 1-(5-phosphoribosyl)-5-[(5-phosphoribosylamino)methylideneamino] imidazole-4-carboxamide isomerase 2 (240 aa).

Asp8 (proton acceptor) is an active-site residue. Asp129 functions as the Proton donor in the catalytic mechanism.

Belongs to the HisA/HisF family.

The protein resides in the cytoplasm. The catalysed reaction is 1-(5-phospho-beta-D-ribosyl)-5-[(5-phospho-beta-D-ribosylamino)methylideneamino]imidazole-4-carboxamide = 5-[(5-phospho-1-deoxy-D-ribulos-1-ylimino)methylamino]-1-(5-phospho-beta-D-ribosyl)imidazole-4-carboxamide. It functions in the pathway amino-acid biosynthesis; L-histidine biosynthesis; L-histidine from 5-phospho-alpha-D-ribose 1-diphosphate: step 4/9. The polypeptide is 1-(5-phosphoribosyl)-5-[(5-phosphoribosylamino)methylideneamino] imidazole-4-carboxamide isomerase 2 (Ruegeria sp. (strain TM1040) (Silicibacter sp.)).